The primary structure comprises 828 residues: Phenylalanine--tRNA ligase beta subunit (828 aa).

Positions 44–155 constitute a tRNA-binding domain; sequence GPVDGPLTVG…GTAEPGADGA (112 aa). One can recognise a B5 domain in the interval 411 to 486; it reads WSPPAIQMPA…RLEGLEVIGS (76 aa). The Mg(2+) site is built by Asp464, Asp470, Glu473, and Glu474. Positions 734–827 constitute an FDX-ACB domain; sequence SPFPAVFQDV…AAEAVGAELR (94 aa).

It belongs to the phenylalanyl-tRNA synthetase beta subunit family. Type 1 subfamily. Tetramer of two alpha and two beta subunits. The cofactor is Mg(2+).

It localises to the cytoplasm. The catalysed reaction is tRNA(Phe) + L-phenylalanine + ATP = L-phenylalanyl-tRNA(Phe) + AMP + diphosphate + H(+). The chain is Phenylalanine--tRNA ligase beta subunit from Mycolicibacterium paratuberculosis (strain ATCC BAA-968 / K-10) (Mycobacterium paratuberculosis).